The primary structure comprises 248 residues: Ubiquinone biosynthesis O-methyltransferase (248 aa).

Residues Arg-41, Gly-72, Asp-93, and Met-136 each coordinate S-adenosyl-L-methionine.

It belongs to the methyltransferase superfamily. UbiG/COQ3 family.

The catalysed reaction is a 3-demethylubiquinol + S-adenosyl-L-methionine = a ubiquinol + S-adenosyl-L-homocysteine + H(+). It carries out the reaction a 3-(all-trans-polyprenyl)benzene-1,2-diol + S-adenosyl-L-methionine = a 2-methoxy-6-(all-trans-polyprenyl)phenol + S-adenosyl-L-homocysteine + H(+). It functions in the pathway cofactor biosynthesis; ubiquinone biosynthesis. O-methyltransferase that catalyzes the 2 O-methylation steps in the ubiquinone biosynthetic pathway. This chain is Ubiquinone biosynthesis O-methyltransferase, found in Rhizobium etli (strain ATCC 51251 / DSM 11541 / JCM 21823 / NBRC 15573 / CFN 42).